The following is a 289-amino-acid chain: ATP synthase gamma chain (289 aa).

The protein belongs to the ATPase gamma chain family. F-type ATPases have 2 components, CF(1) - the catalytic core - and CF(0) - the membrane proton channel. CF(1) has five subunits: alpha(3), beta(3), gamma(1), delta(1), epsilon(1). CF(0) has three main subunits: a, b and c.

Its subcellular location is the cell inner membrane. Produces ATP from ADP in the presence of a proton gradient across the membrane. The gamma chain is believed to be important in regulating ATPase activity and the flow of protons through the CF(0) complex. The chain is ATP synthase gamma chain from Coxiella burnetii (strain CbuG_Q212) (Coxiella burnetii (strain Q212)).